A 744-amino-acid polypeptide reads, in one-letter code: Tripartite motif-containing protein 2 (744 aa).

The residue at position 10 (Ser-10) is a Phosphoserine. The segment at 23-64 (CSICLERYKNPKVLPCLHTFCERCLQNYIPAHSLTLSCPVCR) adopts an RING-type zinc-finger fold. A B box-type zinc finger spans residues 113 to 154 (GKPLSCPNHDGNVMEFYCQSCETAMCRECTEGEHAEHPTVPL). Residues Cys-118, His-121, Cys-141, and His-146 each contribute to the Zn(2+) site. The stretch at 320–421 (TTNAVASETV…IRGSPFKLKV (102 aa)) is one Filamin repeat. Phosphothreonine is present on Thr-371. 3 positions are modified to phosphoserine: Ser-375, Ser-424, and Ser-428. Residues 432-462 (EGVKRRVKSPGSGHVKQKAVKRPASMYSTGK) form a disordered region. 6 NHL repeats span residues 473-516 (IFRV…FSND), 520-563 (KSRF…FSND), 564-605 (GKFK…FQPN), 609-652 (VTRF…FNQE), 656-699 (MLKF…FDGS), and 700-743 (GSFL…YRYL).

The protein belongs to the TRIM/RBCC family. As to quaternary structure, forms homooligomers. Interacts with TRIM3; this interaction reduces TRIM2 activity. Interacts with myosin V; myosin V may not be a substrate for ubiquitination. Interacts with NEFL. Interacts with phosphorylated BCL2L11. Interacts with SIRPA. RING-type zinc finger-dependent and UBE2D1-dependent autoubiquitination. In terms of tissue distribution, highly expressed in the cerebellum, hippocampus, retina and spinal cord. In the cerebellum, strongest expression in Purkinje cells and in the deep cerebellar nuclei. In retina, high expression in the ganglionic cell layer, inner nuclear layer and inthe outer plexiform layer. Particularly high expression in the hippocampus, in pyramidal cells of CA1-CA3 hippocampal areas and ingranule cells of the dentate gyrus.

Its subcellular location is the cytoplasm. The enzyme catalyses S-ubiquitinyl-[E2 ubiquitin-conjugating enzyme]-L-cysteine + [acceptor protein]-L-lysine = [E2 ubiquitin-conjugating enzyme]-L-cysteine + N(6)-ubiquitinyl-[acceptor protein]-L-lysine.. Its pathway is protein modification; protein ubiquitination. UBE2D1-dependent E3 ubiquitin-protein ligase that mediates the ubiquitination of NEFL and of phosphorylated BCL2L11. Plays a neuroprotective function. May play a role in neuronal rapid ischemic tolerance. Plays a role in antiviral immunity and limits new world arenavirus infection independently of its ubiquitin ligase activity by decreasing virus internalization. This Mus musculus (Mouse) protein is Tripartite motif-containing protein 2 (Trim2).